The following is a 392-amino-acid chain: Probable tRNA sulfurtransferase (392 aa).

Positions Asp59–Val166 constitute a THUMP domain. Residues Leu183–Leu184, His208–Phe209, Arg265, Gly287, and Gln296 each bind ATP.

Belongs to the ThiI family.

Its subcellular location is the cytoplasm. The enzyme catalyses [ThiI sulfur-carrier protein]-S-sulfanyl-L-cysteine + a uridine in tRNA + 2 reduced [2Fe-2S]-[ferredoxin] + ATP + H(+) = [ThiI sulfur-carrier protein]-L-cysteine + a 4-thiouridine in tRNA + 2 oxidized [2Fe-2S]-[ferredoxin] + AMP + diphosphate. It carries out the reaction [ThiS sulfur-carrier protein]-C-terminal Gly-Gly-AMP + S-sulfanyl-L-cysteinyl-[cysteine desulfurase] + AH2 = [ThiS sulfur-carrier protein]-C-terminal-Gly-aminoethanethioate + L-cysteinyl-[cysteine desulfurase] + A + AMP + 2 H(+). Its pathway is cofactor biosynthesis; thiamine diphosphate biosynthesis. Functionally, catalyzes the ATP-dependent transfer of a sulfur to tRNA to produce 4-thiouridine in position 8 of tRNAs, which functions as a near-UV photosensor. Also catalyzes the transfer of sulfur to the sulfur carrier protein ThiS, forming ThiS-thiocarboxylate. This is a step in the synthesis of thiazole, in the thiamine biosynthesis pathway. The sulfur is donated as persulfide by IscS. The chain is Probable tRNA sulfurtransferase from Alkaliphilus metalliredigens (strain QYMF).